The sequence spans 274 residues: Hydroxyethylthiazole kinase (274 aa).

Met-49 contacts substrate. Residues Arg-125 and Thr-173 each contribute to the ATP site. Gly-200 lines the substrate pocket.

Belongs to the Thz kinase family. Mg(2+) is required as a cofactor.

The enzyme catalyses 5-(2-hydroxyethyl)-4-methylthiazole + ATP = 4-methyl-5-(2-phosphooxyethyl)-thiazole + ADP + H(+). It participates in cofactor biosynthesis; thiamine diphosphate biosynthesis; 4-methyl-5-(2-phosphoethyl)-thiazole from 5-(2-hydroxyethyl)-4-methylthiazole: step 1/1. In terms of biological role, catalyzes the phosphorylation of the hydroxyl group of 4-methyl-5-beta-hydroxyethylthiazole (THZ). This is Hydroxyethylthiazole kinase from Desulfosudis oleivorans (strain DSM 6200 / JCM 39069 / Hxd3) (Desulfococcus oleovorans).